A 358-amino-acid chain; its full sequence is Gibberellin receptor GID1B (358 aa).

N-acetylalanine is present on Ala-2. The Involved in the stabilization of the negatively charged intermediate by the formation of the oxyanion hole signature appears at His-113 to Gly-115. Residues Gly-115 to Ser-116, Tyr-127, and Ser-191 contribute to the gibberellin A4 site. Gibberellin A3 contacts are provided by Ser-116, Tyr-127, Ser-191, and Phe-238. Ser-191 is a catalytic residue. The active site involves Asp-289. Gly-320 contacts gibberellin A4. Residue Gly-320 coordinates gibberellin A3.

This sequence belongs to the 'GDXG' lipolytic enzyme family. As to quaternary structure, interacts with the DELLA proteins GAI, RGA, RGL1, RGL2 and RGL3 in a GA-dependent manner. In terms of tissue distribution, widely expressed.

The protein resides in the nucleus. Functionally, functions as a soluble gibberellin (GA) receptor. GA is an essential hormone that regulates growth and development in plants. Binds with high affinity the biologically active gibberellin GA4, but has no affinity for the biologically inactive GAs. In response to GA, interacts with specific DELLA proteins, known as repressors of GA-induced growth, and targets them for degradation via proteasome. Seems to be required for GA signaling that controls root growth, seed germination and flower development. May function as a dominant GA receptor at low GA concentrations in germination. Partially redundant with GID1A and GID1C. The chain is Gibberellin receptor GID1B (GID1B) from Arabidopsis thaliana (Mouse-ear cress).